The primary structure comprises 320 residues: 4-diphosphocytidyl-2-C-methyl-D-erythritol kinase (320 aa).

Residue lysine 20 is part of the active site. ATP is bound at residue 112 to 122; sequence PVAGGMGGGSA. Aspartate 154 is a catalytic residue.

It belongs to the GHMP kinase family. IspE subfamily.

The enzyme catalyses 4-CDP-2-C-methyl-D-erythritol + ATP = 4-CDP-2-C-methyl-D-erythritol 2-phosphate + ADP + H(+). The protein operates within isoprenoid biosynthesis; isopentenyl diphosphate biosynthesis via DXP pathway; isopentenyl diphosphate from 1-deoxy-D-xylulose 5-phosphate: step 3/6. Functionally, catalyzes the phosphorylation of the position 2 hydroxy group of 4-diphosphocytidyl-2C-methyl-D-erythritol. This chain is 4-diphosphocytidyl-2-C-methyl-D-erythritol kinase, found in Arthrobacter sp. (strain FB24).